The primary structure comprises 223 residues: Large ribosomal subunit protein uL4 (223 aa).

A disordered region spans residues 49 to 106 (AAARQGTHSTKTRGEVSGGGRKPYRQKGTGRARQGSTRAPQFTGGGVVHGPKPRDYSQ).

The protein belongs to the universal ribosomal protein uL4 family. As to quaternary structure, part of the 50S ribosomal subunit.

Functionally, one of the primary rRNA binding proteins, this protein initially binds near the 5'-end of the 23S rRNA. It is important during the early stages of 50S assembly. It makes multiple contacts with different domains of the 23S rRNA in the assembled 50S subunit and ribosome. In terms of biological role, forms part of the polypeptide exit tunnel. The polypeptide is Large ribosomal subunit protein uL4 (Mycobacterium bovis (strain ATCC BAA-935 / AF2122/97)).